The following is a 193-amino-acid chain: Adenine phosphoribosyltransferase (193 aa).

The protein belongs to the purine/pyrimidine phosphoribosyltransferase family. In terms of assembly, homodimer.

The protein localises to the cytoplasm. The enzyme catalyses AMP + diphosphate = 5-phospho-alpha-D-ribose 1-diphosphate + adenine. The protein operates within purine metabolism; AMP biosynthesis via salvage pathway; AMP from adenine: step 1/1. Functionally, catalyzes a salvage reaction resulting in the formation of AMP, that is energically less costly than de novo synthesis. In Bifidobacterium longum (strain NCC 2705), this protein is Adenine phosphoribosyltransferase.